A 167-amino-acid polypeptide reads, in one-letter code: Epithelial membrane protein 2 (167 aa).

A helical membrane pass occupies residues 1–21; the sequence is MLVLLAFIIVFHITSAALLLV. N-linked (GlcNAc...) asparagine glycosylation is found at asparagine 44, asparagine 47, and asparagine 52. Transmembrane regions (helical) follow at residues 67–87, 95–115, and 143–163; these read TMILSTILCCIAFLIFLLQLF, FVLTSIIQLMACLCVMIAASI, and FILAWVAFAFTFISGLMYLIL.

It belongs to the PMP-22/EMP/MP20 family. As to quaternary structure, interacts with PTK2; regulates PTK2 activation and localization. Interacts with ITGB3; regulates the levels of the heterodimer ITGA5-ITGB3 integrin surface expression. Interacts with P2RX7 (via C-terminus). Interacts with ITGB1; the interaction may be direct or indirect and ITGB1 has a heterodimer form.

It is found in the golgi apparatus membrane. Its subcellular location is the cell membrane. It localises to the apical cell membrane. The protein resides in the membrane raft. The protein localises to the cytoplasm. It is found in the nucleus. Its subcellular location is the perinuclear region. Functions as a key regulator of cell membrane composition by regulating protein surface expression. Also, plays a role in regulation of processes including cell migration, cell proliferation, cell contraction and cell adhesion. Regulates transepithelial migration of neutrophils into the alveolar lumen, potentially via mediation of cell surface expression of adhesion markers and lipid raft formation. Negatively regulates caveolae formation by reducing CAV1 expression and CAV1 amount by increasing lysosomal degradation. Facilitates surface trafficking and the formation of lipid rafts bearing GPI-anchor proteins. Regulates surface expression of MHC1 and ICAM1 proteins increasing susceptibility to T-cell mediated cytotoxicity. Regulates the plasma membrane expression of the integrin heterodimers ITGA6-ITGB1, ITGA5-ITGB3 and ITGA5-ITGB1 resulting in modulation of cell-matrix adhesion. Also regulates many processes through PTK2. Regulates blood vessel endothelial cell migration and angiogenesis by regulating VEGF protein expression through PTK2 activation. Regulates cell migration and cell contraction through PTK2 and SRC activation. Regulates focal adhesion density, F-actin conformation and cell adhesion capacity through interaction with PTK2. Positively regulates cell proliferation. Plays a role during cell death and cell blebbing. Promotes angiogenesis and vasculogenesis through induction of VEGFA via a HIF1A-dependent pathway. Also plays a role in embryo implantation by regulating surface trafficking of integrin heterodimer ITGA5-ITGB3. Plays a role in placental angiogenesis and uterine natural killer cell regulation at the maternal-fetal placental interface, however not required in the maternal tissues for a viable pregnancy. Involved in the early stages of embryogenic development and cardiogenesis, potentially via regulation of epithelial-mesenchymal transition timing. May play a role in glomerular filtration. This chain is Epithelial membrane protein 2 (EMP2), found in Bos taurus (Bovine).